Reading from the N-terminus, the 443-residue chain is UDP-N-acetylmuramoylalanine--D-glutamate ligase (443 aa).

Residue 116–122 (GTNGKST) coordinates ATP.

Belongs to the MurCDEF family.

The protein resides in the cytoplasm. It catalyses the reaction UDP-N-acetyl-alpha-D-muramoyl-L-alanine + D-glutamate + ATP = UDP-N-acetyl-alpha-D-muramoyl-L-alanyl-D-glutamate + ADP + phosphate + H(+). The protein operates within cell wall biogenesis; peptidoglycan biosynthesis. Cell wall formation. Catalyzes the addition of glutamate to the nucleotide precursor UDP-N-acetylmuramoyl-L-alanine (UMA). The polypeptide is UDP-N-acetylmuramoylalanine--D-glutamate ligase (Novosphingobium aromaticivorans (strain ATCC 700278 / DSM 12444 / CCUG 56034 / CIP 105152 / NBRC 16084 / F199)).